Reading from the N-terminus, the 264-residue chain is Glutamate racemase (264 aa).

Substrate is bound by residues 10–11 (DS) and 42–43 (YG). C73 acts as the Proton donor/acceptor in catalysis. Residue 74 to 75 (NT) participates in substrate binding. Catalysis depends on C183, which acts as the Proton donor/acceptor. 184–185 (TH) is a substrate binding site.

This sequence belongs to the aspartate/glutamate racemases family.

It carries out the reaction L-glutamate = D-glutamate. It participates in cell wall biogenesis; peptidoglycan biosynthesis. Its function is as follows. Provides the (R)-glutamate required for cell wall biosynthesis. The chain is Glutamate racemase from Streptococcus agalactiae serotype III (strain NEM316).